The chain runs to 128 residues: Ribosome-binding factor A (128 aa).

The protein belongs to the RbfA family. In terms of assembly, monomer. Binds 30S ribosomal subunits, but not 50S ribosomal subunits or 70S ribosomes.

The protein localises to the cytoplasm. In terms of biological role, one of several proteins that assist in the late maturation steps of the functional core of the 30S ribosomal subunit. Associates with free 30S ribosomal subunits (but not with 30S subunits that are part of 70S ribosomes or polysomes). Required for efficient processing of 16S rRNA. May interact with the 5'-terminal helix region of 16S rRNA. This chain is Ribosome-binding factor A, found in Rippkaea orientalis (strain PCC 8801 / RF-1) (Cyanothece sp. (strain PCC 8801)).